A 450-amino-acid chain; its full sequence is MAAVSHLAKLGLFDARVPRYTSYPTAPNFGVGVTENLHADWISSIPAGGSISLYLHVPFCRRLCWFCACRTQGTSSDAPVRAYAAALKSELALLRARLAPGVRLARMHWGGGTPTLLPPTLIHELALAIRDAVPSDAETDFSVEIDPTEIDAARLDALFEAGMTRVSIGVQDFDPLIQQSIGREQSFELTQRLTEDLRHRGLMGLDADILYGLPHQTAPGVADSVQKLLSLSPDRVAVLGYAHVPAVSRRQLMIPTASIPGPEERLDLFETARTLILWDGYQQVGLDHFARAGDPLAHAHACGRLCRSFQGYTDDRAEVLIGLGASAISRFPQGFTQNAPSTSDHLRAIRSGRFSTARGHVLSDEDRLRGRMIEQLLCEFRISRAQILARFAVAPERLETLFRTCAAAFPGVVEITGHGLEILEEGRPLARIVARSFDRYDASGKPQGAI.

Residues I45–Q282 enclose the Radical SAM core domain. Residue Y54 coordinates S-adenosyl-L-methionine. [4Fe-4S] cluster contacts are provided by C60 and C64. An S-adenosyl-L-methionine-binding site is contributed by F66. Residue C67 coordinates [4Fe-4S] cluster. S-adenosyl-L-methionine is bound by residues G111, G112–T113, E144, Q171, R183, D208, A242, and I328.

It belongs to the anaerobic coproporphyrinogen-III oxidase family. As to quaternary structure, monomer. [4Fe-4S] cluster is required as a cofactor.

Its subcellular location is the cytoplasm. It catalyses the reaction coproporphyrinogen III + 2 S-adenosyl-L-methionine = protoporphyrinogen IX + 2 5'-deoxyadenosine + 2 L-methionine + 2 CO2. It participates in porphyrin-containing compound metabolism; protoporphyrin-IX biosynthesis; protoporphyrinogen-IX from coproporphyrinogen-III (AdoMet route): step 1/1. Its function is as follows. Involved in the heme and chlorophyll biosynthesis. Catalyzes the anaerobic oxidative decarboxylation of propionate groups of rings A and B of coproporphyrinogen III to yield the vinyl groups in protoporphyrinogen IX. This is Oxygen-independent coproporphyrinogen III oxidase (hemZ) from Cereibacter sphaeroides (strain ATCC 17023 / DSM 158 / JCM 6121 / CCUG 31486 / LMG 2827 / NBRC 12203 / NCIMB 8253 / ATH 2.4.1.) (Rhodobacter sphaeroides).